The following is a 237-amino-acid chain: MIPRHVAIVMDGNGRWANRRGLPRVAGHRAGAKVVRRIVEYAAEKPLEVLTLFAFSIENRARPQSEVNFLMSLFLDSLKKNTEELHKNNVQLRVIGDHREFDKKMLAQIQTSQDLTKHNTGLKLIIALNYSGRWDILQAVQRMAEKIKNQELTSELMSAELFQNYLCLSDLPEPDLLIRTSGEQRLSNFMLWQFAYTEIYFTPALWPDFNEETFDQALAFYRTRQRRFGLTPEQVEK.

Asp11 is an active-site residue. Position 11 (Asp11) interacts with Mg(2+). Residues 12–15 (GNGR), Trp16, Arg24, His28, and 56–58 (SIE) each bind substrate. Catalysis depends on Asn59, which acts as the Proton acceptor. Substrate is bound by residues Arg62, Arg179, and 185–187 (RLS). Position 198 (Glu198) interacts with Mg(2+).

This sequence belongs to the UPP synthase family. Homodimer. Mg(2+) serves as cofactor.

The enzyme catalyses 8 isopentenyl diphosphate + (2E,6E)-farnesyl diphosphate = di-trans,octa-cis-undecaprenyl diphosphate + 8 diphosphate. Catalyzes the sequential condensation of isopentenyl diphosphate (IPP) with (2E,6E)-farnesyl diphosphate (E,E-FPP) to yield (2Z,6Z,10Z,14Z,18Z,22Z,26Z,30Z,34E,38E)-undecaprenyl diphosphate (di-trans,octa-cis-UPP). UPP is the precursor of glycosyl carrier lipid in the biosynthesis of bacterial cell wall polysaccharide components such as peptidoglycan and lipopolysaccharide. The chain is Ditrans,polycis-undecaprenyl-diphosphate synthase ((2E,6E)-farnesyl-diphosphate specific) from Coxiella burnetii (strain RSA 493 / Nine Mile phase I).